Reading from the N-terminus, the 82-residue chain is RNA-binding protein Hfq (82 aa).

A Sm domain is found at 9–69 (DQLLNTARKD…ISTIIPAKII (61 aa)).

The protein belongs to the Hfq family. As to quaternary structure, homohexamer.

Functionally, RNA chaperone that binds small regulatory RNA (sRNAs) and mRNAs to facilitate mRNA translational regulation in response to envelope stress, environmental stress and changes in metabolite concentrations. Also binds with high specificity to tRNAs. The protein is RNA-binding protein Hfq of Leptospira borgpetersenii serovar Hardjo-bovis (strain L550).